We begin with the raw amino-acid sequence, 67 residues long: MRKTIKVTLIRSRIGRLPKHKATLDGLGLRRINRHVELNNTPAIRGMLNLVSYMIKVELLEEGNQCV.

The protein belongs to the universal ribosomal protein uL30 family. Part of the 50S ribosomal subunit.

This chain is Large ribosomal subunit protein uL30, found in Hamiltonella defensa subsp. Acyrthosiphon pisum (strain 5AT).